Consider the following 889-residue polypeptide: Cytoplasmic aconitate hydratase (889 aa).

Residues Q86 and 205 to 207 each bind substrate; that span reads DSH. 3 residues coordinate [4Fe-4S] cluster: C437, C503, and C506. Substrate-binding positions include R536, R541, R699, and 779–780; that span reads SR.

It belongs to the aconitase/IPM isomerase family. As to quaternary structure, interacts (when associated with the 4Fe-4S) with FBXL5. Interacts with frataxin(81-210). Requires [4Fe-4S] cluster as cofactor.

Its subcellular location is the cytoplasm. The protein resides in the cytosol. It carries out the reaction citrate = D-threo-isocitrate. In terms of biological role, bifunctional iron sensor that switches between 2 activities depending on iron availability. Iron deprivation, promotes its mRNA binding activity through which it regulates the expression of genes involved in iron uptake, sequestration and utilization. Binds to iron-responsive elements (IRES) in the untranslated region of target mRNAs preventing for instance the translation of ferritin and aminolevulinic acid synthase and stabilizing the transferrin receptor mRNA. Conversely, when cellular iron levels are high, binds a 4Fe-4S cluster which precludes RNA binding activity and promotes the aconitase activity, the isomerization of citrate to isocitrate via cis-aconitate. In Bos taurus (Bovine), this protein is Cytoplasmic aconitate hydratase (ACO1).